The following is an 88-amino-acid chain: Small ribosomal subunit protein bS20 (88 aa).

This sequence belongs to the bacterial ribosomal protein bS20 family.

Its function is as follows. Binds directly to 16S ribosomal RNA. This is Small ribosomal subunit protein bS20 from Clostridium acetobutylicum (strain ATCC 824 / DSM 792 / JCM 1419 / IAM 19013 / LMG 5710 / NBRC 13948 / NRRL B-527 / VKM B-1787 / 2291 / W).